A 126-amino-acid chain; its full sequence is Transcription antitermination protein NusB (126 aa).

It belongs to the NusB family.

In terms of biological role, involved in transcription antitermination. Required for transcription of ribosomal RNA (rRNA) genes. Binds specifically to the boxA antiterminator sequence of the ribosomal RNA (rrn) operons. The polypeptide is Transcription antitermination protein NusB (Oceanobacillus iheyensis (strain DSM 14371 / CIP 107618 / JCM 11309 / KCTC 3954 / HTE831)).